Here is a 219-residue protein sequence, read N- to C-terminus: Large ribosomal subunit protein uL3 (219 aa).

The interval 136 to 156 (GASHGAHRNHRKPGSIGGCAT) is disordered.

The protein belongs to the universal ribosomal protein uL3 family. Part of the 50S ribosomal subunit. Forms a cluster with proteins L14 and L19.

In terms of biological role, one of the primary rRNA binding proteins, it binds directly near the 3'-end of the 23S rRNA, where it nucleates assembly of the 50S subunit. The polypeptide is Large ribosomal subunit protein uL3 (Kineococcus radiotolerans (strain ATCC BAA-149 / DSM 14245 / SRS30216)).